We begin with the raw amino-acid sequence, 276 residues long: ATP synthase subunit a (276 aa).

Transmembrane regions (helical) follow at residues 47-67 (WHID…WLFY), 107-127 (IAPL…MDLI), 152-172 (DLNV…FYSI), 188-208 (PFNH…TLVA), 226-246 (LIFI…SVPW), and 247-267 (AIFH…LTIV).

The protein belongs to the ATPase A chain family. As to quaternary structure, F-type ATPases have 2 components, CF(1) - the catalytic core - and CF(0) - the membrane proton channel. CF(1) has five subunits: alpha(3), beta(3), gamma(1), delta(1), epsilon(1). CF(0) has three main subunits: a(1), b(2) and c(9-12). The alpha and beta chains form an alternating ring which encloses part of the gamma chain. CF(1) is attached to CF(0) by a central stalk formed by the gamma and epsilon chains, while a peripheral stalk is formed by the delta and b chains.

The protein resides in the cell inner membrane. Its function is as follows. Key component of the proton channel; it plays a direct role in the translocation of protons across the membrane. The protein is ATP synthase subunit a of Shewanella pealeana (strain ATCC 700345 / ANG-SQ1).